We begin with the raw amino-acid sequence, 39 residues long: Large ribosomal subunit protein bL36 (39 aa).

Belongs to the bacterial ribosomal protein bL36 family.

This chain is Large ribosomal subunit protein bL36, found in Oenococcus oeni (strain ATCC BAA-331 / PSU-1).